The following is a 558-amino-acid chain: Acid-sensing ion channel 4-B (558 aa).

At 1–71 (MPIEFVCKIK…TSERLGFRQT (71 aa)) the chain is on the cytoplasmic side. Residues 72 to 92 (LWGLALLVSLGLFLYQATWSA) traverse the membrane as a helical segment. Topologically, residues 93-433 (ATYLERPHLA…ETIEQKKAYD (341 aa)) are extracellular. 2 disulfide bridges follow: Cys-120/Cys-204 and Cys-182/Cys-189. Residues Asn-140, Asn-183, Asn-188, Asn-210, and Asn-245 are each glycosylated (N-linked (GlcNAc...) asparagine). Intrachain disulfides connect Cys-298/Cys-373, Cys-317/Cys-369, Cys-321/Cys-367, Cys-330/Cys-351, and Cys-332/Cys-344. The N-linked (GlcNAc...) asparagine glycan is linked to Asn-374. The chain crosses the membrane as a helical span at residues 434–454 (IAGLLGDIGGQMGLFIGASIL). The short motif at 450-452 (GAS) is the GAS motif; ion selectivity filter element. At 455 to 558 (TILEILDYIY…QQAVQQDFAC (104 aa)) the chain is on the cytoplasmic side.

The protein belongs to the amiloride-sensitive sodium channel (TC 1.A.6) family. ASIC4 subfamily. Homotrimer. Heterotrimer; with other ASIC proteins producing functional channels. In terms of tissue distribution, expressed in central nervous system.

The protein resides in the cell membrane. It carries out the reaction Na(+)(in) = Na(+)(out). Functionally, does not exhibit measurable stand-alone pH-gated sodium channel activity but may form pH-gated heterotrimeric sodium channels. This chain is Acid-sensing ion channel 4-B, found in Danio rerio (Zebrafish).